The sequence spans 341 residues: Glycerol-3-phosphate dehydrogenase [NAD(P)+] 1 (341 aa).

Residues S11, W12, R32, R33, and K106 each contribute to the NADPH site. Sn-glycerol 3-phosphate contacts are provided by K106, G137, and S139. A141 contacts NADPH. Residues K192, D245, S255, R256, and N257 each coordinate sn-glycerol 3-phosphate. The active-site Proton acceptor is K192. R256 contributes to the NADPH binding site. NADPH-binding residues include V280 and E282.

This sequence belongs to the NAD-dependent glycerol-3-phosphate dehydrogenase family.

It localises to the cytoplasm. It catalyses the reaction sn-glycerol 3-phosphate + NAD(+) = dihydroxyacetone phosphate + NADH + H(+). The catalysed reaction is sn-glycerol 3-phosphate + NADP(+) = dihydroxyacetone phosphate + NADPH + H(+). It functions in the pathway membrane lipid metabolism; glycerophospholipid metabolism. In terms of biological role, catalyzes the reduction of the glycolytic intermediate dihydroxyacetone phosphate (DHAP) to sn-glycerol 3-phosphate (G3P), the key precursor for phospholipid synthesis. This is Glycerol-3-phosphate dehydrogenase [NAD(P)+] 1 from Salinibacter ruber (strain DSM 13855 / M31).